We begin with the raw amino-acid sequence, 620 residues long: Eukaryotic translation initiation factor 2-alpha kinase 1 (620 aa).

Positions 1-38 are disordered; that stretch reads MLGGGSVDGERDTDDDAAGAVAAPPAIDFPAEVSDPKY. Positions 18 to 28 are enriched in low complexity; that stretch reads AGAVAAPPAID. The short motif at 85 to 104 is the SIFI-degron element; it reads LHSKQVFKLLCQTFIKMGLL. Positions 167–581 constitute a Protein kinase domain; the sequence is FEELAILGKG…ALQLLQSELF (415 aa). Residues 173 to 181 and K196 each bind ATP; that span reads LGKGGYGRV. T283 carries the post-translational modification Phosphothreonine. Residues 408-413 form an HRM 1 repeat; sequence ACPYVM. D440 serves as the catalytic Proton acceptor. T484 and T486 each carry phosphothreonine; by autocatalysis. Position 491 is a phosphothreonine (T491). The stretch at 550-555 is one HRM 2 repeat; the sequence is RCPVQA.

It belongs to the protein kinase superfamily. Ser/Thr protein kinase family. GCN2 subfamily. In terms of assembly, synthesized in an inactive form that binds to the N-terminal domain of CDC37. Has to be associated with a multiprotein complex containing Hsp90, CDC37 and PPP5C for maturation and activation by autophosphorylation. The phosphatase PPP5C modulates this activation. Homodimer; homodimerizes in presence of heme, forming a disulfide-linked inactive homodimer. Interacts with DELE1; binds both to full-length DELE1 and processed form of DELE1 (S-DELE1) in response to stress, leading to activate its protein kinase activity and trigger the integrated stress response (ISR). Post-translationally, activated by autophosphorylation; phosphorylated predominantly on serine and threonine residues, but also on tyrosine residues. Autophosphorylation at Thr-486 is required for kinase activation. The active autophosphorylated form apparently is largely refractory to cellular heme fluctuations. In terms of processing, ubiquitinated and degraded by the SIFI complex once the mitochondrial stress has been resolved, thereby providing stress response silencing. Within the SIFI complex, UBR4 initiates ubiquitin chain that are further elongated or branched by KCMF1.

Its subcellular location is the cytoplasm. The catalysed reaction is L-seryl-[protein] + ATP = O-phospho-L-seryl-[protein] + ADP + H(+). The enzyme catalyses L-threonyl-[protein] + ATP = O-phospho-L-threonyl-[protein] + ADP + H(+). In normal conditions, the protein kinase activity is inhibited; inhibition is relieved by various stress conditions. Inhibited by heme: in presence of heme, forms a disulfide-linked inactive homodimer. Heme depletion relieves inhibition and stimulates kinase activity by autophosphorylation. Inhibited by the heme metabolites biliverdin and bilirubin. Induced by oxidative stress generated by arsenite treatment. Binding of nitric oxide (NO) to the heme iron in the N-terminal heme-binding domain activates the kinase activity, while binding of carbon monoxide (CO) suppresses kinase activity. Protein kinase activity is also activated upon binding to DELE1 in response to various stress, triggering the integrated stress response (ISR): activated by full-length DELE1 in response to iron deficiency, while it is activated by the processed form of DELE1 (S-DELE1) in response to mitochondrial stress. In terms of biological role, metabolic-stress sensing protein kinase that phosphorylates the alpha subunit of eukaryotic translation initiation factor 2 (EIF2S1/eIF-2-alpha) in response to various stress conditions. Key activator of the integrated stress response (ISR) required for adaptation to various stress, such as heme deficiency, oxidative stress, osmotic shock, mitochondrial dysfunction and heat shock. EIF2S1/eIF-2-alpha phosphorylation in response to stress converts EIF2S1/eIF-2-alpha in a global protein synthesis inhibitor, leading to a global attenuation of cap-dependent translation, while concomitantly initiating the preferential translation of ISR-specific mRNAs, such as the transcriptional activator ATF4, and hence allowing ATF4-mediated reprogramming. Acts as a key sensor of heme-deficiency: in normal conditions, binds hemin via a cysteine thiolate and histidine nitrogenous coordination, leading to inhibit the protein kinase activity. This binding occurs with moderate affinity, allowing it to sense the heme concentration within the cell: heme depletion relieves inhibition and stimulates kinase activity, activating the ISR. Thanks to this unique heme-sensing capacity, plays a crucial role to shut off protein synthesis during acute heme-deficient conditions. In red blood cells (RBCs), controls hemoglobin synthesis ensuring a coordinated regulation of the synthesis of its heme and globin moieties. It thereby plays an essential protective role for RBC survival in anemias of iron deficiency. Iron deficiency also triggers activation by full-length DELE1. Also activates the ISR in response to mitochondrial dysfunction: HRI/EIF2AK1 protein kinase activity is activated upon binding to the processed form of DELE1 (S-DELE1), thereby promoting the ATF4-mediated reprogramming. Also acts as an activator of mitophagy in response to mitochondrial damage: catalyzes phosphorylation of eIF-2-alpha (EIF2S1) following activation by S-DELE1, thereby promoting mitochondrial localization of EIF2S1, triggering PRKN-independent mitophagy. The protein is Eukaryotic translation initiation factor 2-alpha kinase 1 of Rattus norvegicus (Rat).